Reading from the N-terminus, the 864-residue chain is MSKSAVSPMMQQYLGIKAQHTDKLVFYRMGDFYEMFFDDAVEAAKLLDITLTTRGQVDGEPVKMAGVPFHAAEQYLARLVKLGKSVAICEQVGEVGAGKGPVERKVVRIVTPGTLTDSALLEDKETNRIVAVSPDKKYIGLAWASLQSGEFKTKLTTVDKLDDELARLQAAEILLPDSKNAPQLQTASGVTRLNAWQFAADAGEKLLTEYFGCQDLRGFGLDGKEHAVAIGAAGALLNYIRLTQNLMPQHLDGLSLETDSQYIGMDAATRRNLEITQTLSGKKSPTLMSTLDLCATHMGSRLLALWLHHPLRNRAHIRARQEAVAALESQYKPLQCRLKNIADIERIAARIAVGNARPRDLASLRDSLFELAQIDLSANGSSLLETLKAVFPENLSTAEQLRQAILPEPSVWLKDGNVINHGFHPELDELRRIQNHGDEFLLDLEAKERERTGLSTLKVEFNRVHGFYIELSKTQAEQAPADYQRRQTLKNAERFITPELKAFEDKVLTAQEQALALEKQLFDGVLKNLQTALPQLQKAAKAAAALDVLSTFSALAKERNFVRPEFADYPVIHIENGRHPVVEQQVRHFTANHTDLDHKHRLMLLTGPNMGGKSTYMRQVALIVLLAHTGCFVPADAATIGPIDQIFTRIGASDDLASNRSTFMVEMSETAYILHHATEQSLVLMDEVGRGTSTFDGLALAHAVAEHLLQKNKSFSLFATHYFELTYLPEAHAAAVNMHLSALEQGQDIVFLHQIQPGPAGKSYGIAVAKLAGLPVRALKSAQKHLNGLENQAAANRPQLDIFSTMPSEKGDEPNVGNFVDKAEEKHFEGILAAALEKLDPDSLTPREALSELYRLKDLCKSVS.

607–614 (GPNMGGKS) is an ATP binding site.

The protein belongs to the DNA mismatch repair MutS family.

Functionally, this protein is involved in the repair of mismatches in DNA. It is possible that it carries out the mismatch recognition step. This protein has a weak ATPase activity. The sequence is that of DNA mismatch repair protein MutS from Neisseria meningitidis serogroup C / serotype 2a (strain ATCC 700532 / DSM 15464 / FAM18).